The following is a 133-amino-acid chain: Small ribosomal subunit protein uS8 (133 aa).

This sequence belongs to the universal ribosomal protein uS8 family. Part of the 30S ribosomal subunit. Contacts proteins S5 and S12.

Its function is as follows. One of the primary rRNA binding proteins, it binds directly to 16S rRNA central domain where it helps coordinate assembly of the platform of the 30S subunit. This is Small ribosomal subunit protein uS8 from Syntrophus aciditrophicus (strain SB).